A 246-amino-acid polypeptide reads, in one-letter code: 1-(5-phosphoribosyl)-5-[(5-phosphoribosylamino)methylideneamino] imidazole-4-carboxamide isomerase (246 aa).

Residue aspartate 12 is the Proton acceptor of the active site. Aspartate 134 functions as the Proton donor in the catalytic mechanism.

It belongs to the HisA/HisF family.

It localises to the cytoplasm. The enzyme catalyses 1-(5-phospho-beta-D-ribosyl)-5-[(5-phospho-beta-D-ribosylamino)methylideneamino]imidazole-4-carboxamide = 5-[(5-phospho-1-deoxy-D-ribulos-1-ylimino)methylamino]-1-(5-phospho-beta-D-ribosyl)imidazole-4-carboxamide. It participates in amino-acid biosynthesis; L-histidine biosynthesis; L-histidine from 5-phospho-alpha-D-ribose 1-diphosphate: step 4/9. The protein is 1-(5-phosphoribosyl)-5-[(5-phosphoribosylamino)methylideneamino] imidazole-4-carboxamide isomerase of Psychrobacter cryohalolentis (strain ATCC BAA-1226 / DSM 17306 / VKM B-2378 / K5).